Reading from the N-terminus, the 202-residue chain is 3-isopropylmalate dehydratase small subunit (202 aa).

It belongs to the LeuD family. LeuD type 1 subfamily. In terms of assembly, heterodimer of LeuC and LeuD.

It carries out the reaction (2R,3S)-3-isopropylmalate = (2S)-2-isopropylmalate. It participates in amino-acid biosynthesis; L-leucine biosynthesis; L-leucine from 3-methyl-2-oxobutanoate: step 2/4. Catalyzes the isomerization between 2-isopropylmalate and 3-isopropylmalate, via the formation of 2-isopropylmaleate. The protein is 3-isopropylmalate dehydratase small subunit of Caulobacter vibrioides (strain ATCC 19089 / CIP 103742 / CB 15) (Caulobacter crescentus).